The sequence spans 441 residues: N-acetyl-S-(2-succino)cysteine monooxygenase (441 aa).

6 residues coordinate FMN: D59, T96, H146, Y150, S220, and S221.

The protein belongs to the NtaA/SnaA/DszA monooxygenase family. As to quaternary structure, homodimer. The cofactor is FMN.

It carries out the reaction N-acetyl-S-(2-succino)-L-cysteine + NADH + O2 + H(+) = N-acetyl-L-cysteine + oxaloacetate + NAD(+) + H2O. The protein operates within amino-acid biosynthesis; L-cysteine biosynthesis. In terms of biological role, catalyzes the oxidative cleavage of the C-S bond of N-acetyl-S-(2-succino)cysteine, forming oxaloacetate and N-acetylcysteine (NAC). Is involved in a S-(2-succino)cysteine (2SC) degradation pathway that allows B.subtilis to grow on 2SC as a sole sulfur source, via its metabolization to cysteine. Shows almost no activity on S-succinylglutathione and 2SC. The protein is N-acetyl-S-(2-succino)cysteine monooxygenase of Bacillus subtilis (strain 168).